A 681-amino-acid chain; its full sequence is Minichromosome maintenance domain-containing protein 2 (681 aa).

Ser-292 bears the Phosphoserine mark. The region spanning 533–621 (KQFTTEDFEK…LIAALLLEIS (89 aa)) is the MCM domain.

As to expression, predominantly expressed in the gonads and the brain. Not detected in the heart, lung, nor embryonic fibroblasts.

Functionally, plays an important role in meiotic recombination and associated DNA double-strand break repair. This Mus musculus (Mouse) protein is Minichromosome maintenance domain-containing protein 2 (Mcmdc2).